The primary structure comprises 537 residues: Phenylalanine--tRNA ligase beta subunit (537 aa).

The B5 domain maps to Phe268–Glu343. Positions 321, 327, 330, and 331 each coordinate Mg(2+).

Belongs to the phenylalanyl-tRNA synthetase beta subunit family. Type 2 subfamily. In terms of assembly, tetramer of two alpha and two beta subunits. It depends on Mg(2+) as a cofactor.

The protein localises to the cytoplasm. It catalyses the reaction tRNA(Phe) + L-phenylalanine + ATP = L-phenylalanyl-tRNA(Phe) + AMP + diphosphate + H(+). This chain is Phenylalanine--tRNA ligase beta subunit, found in Thermoplasma volcanium (strain ATCC 51530 / DSM 4299 / JCM 9571 / NBRC 15438 / GSS1).